Reading from the N-terminus, the 343-residue chain is Heat-inducible transcription repressor HrcA (343 aa).

Belongs to the HrcA family.

Functionally, negative regulator of class I heat shock genes (grpE-dnaK-dnaJ and groELS operons). Prevents heat-shock induction of these operons. The polypeptide is Heat-inducible transcription repressor HrcA (Mycobacterium leprae (strain Br4923)).